An 895-amino-acid chain; its full sequence is ABC-transporter-regulating transcription factor (895 aa).

The segment at residues 69 to 96 is a DNA-binding region (zn(2)-C6 fungal-type); the sequence is CDMCRKKKIKCDGKMPKCSHCTNYKTDC. A disordered region spans residues 156–218; it reads HASGSNTPHN…QKESETEVEG (63 aa). The segment covering 158–207 has biased composition (polar residues); sequence SGSNTPHNPQKINIPSQSQIAMSQQNSSSHYSTPRLESQSSPRTAATSPE. The chain crosses the membrane as a helical span at residues 648–668; it reads CVWLILYYPVSALVTLFANIL. Residues 726-813 form a disordered region; sequence ESYSKKKRKS…TGVSTNIPPN (88 aa). Residues 755 to 765 are compositionally biased toward low complexity; the sequence is PSTTQPTQAPS.

In terms of assembly, interacts with ncaA.

It localises to the nucleus. The protein localises to the membrane. Transcription factor that regulates expression of the genes related to ergosterol biosynthesis, including erg3B, erg24A, erg25A, as well as cyp51A that encodes a target protein of azoles. In coordination with ffmA and ncaA, is responsible for the expression of the ABC transporter abcC/cdr1B/abcG1 related to azole resistance. Directly binds both the cyp51A and abcC/cdr1B/abcG1 promoters at a conserved 34 bp region called the atrR response element (ATRE). AtrR also binds to the promoter regions of both the sterol response transcription factor srbA and atrR genes themselves, the latter suggesting the possibility that atrR is autoregulated. Also regulates iron uptake, most likely via cooperation with SrbA. AtrR is necessary for hypoxia adaptation and virulence. In Aspergillus fumigatus (strain ATCC MYA-4609 / CBS 101355 / FGSC A1100 / Af293) (Neosartorya fumigata), this protein is ABC-transporter-regulating transcription factor.